A 138-amino-acid chain; its full sequence is Large ribosomal subunit protein uL16 (138 aa).

The span at Met-1–Gln-13 shows a compositional bias: basic residues. Residues Met-1–Gly-24 are disordered.

The protein belongs to the universal ribosomal protein uL16 family. In terms of assembly, part of the 50S ribosomal subunit.

Binds 23S rRNA and is also seen to make contacts with the A and possibly P site tRNAs. The protein is Large ribosomal subunit protein uL16 of Cupriavidus necator (strain ATCC 17699 / DSM 428 / KCTC 22496 / NCIMB 10442 / H16 / Stanier 337) (Ralstonia eutropha).